We begin with the raw amino-acid sequence, 211 residues long: Peroxiredoxin (211 aa).

The Thioredoxin domain maps to 2–156 (PLIGDKFPEM…IVRMIRAFRV (155 aa)). Cys44 (cysteine sulfenic acid (-SOH) intermediate) is an active-site residue. Arg119 serves as a coordination point for substrate. An intrachain disulfide couples Cys198 to Cys204.

Belongs to the peroxiredoxin family. Prx6 subfamily. In terms of assembly, homodecamer. Pentamer of dimers that assemble into a ring structure.

The protein localises to the cytoplasm. The catalysed reaction is a hydroperoxide + [thioredoxin]-dithiol = an alcohol + [thioredoxin]-disulfide + H2O. Functionally, thiol-specific peroxidase that catalyzes the reduction of hydrogen peroxide and organic hydroperoxides to water and alcohols, respectively. Plays a role in cell protection against oxidative stress by detoxifying peroxides. The polypeptide is Peroxiredoxin (Methanothermobacter marburgensis (strain ATCC BAA-927 / DSM 2133 / JCM 14651 / NBRC 100331 / OCM 82 / Marburg) (Methanobacterium thermoautotrophicum)).